The chain runs to 208 residues: Small ribosomal subunit protein uS4 (208 aa).

The S4 RNA-binding domain maps to 95–157; that stretch reads RRIDNVVYRA…DSLKKLVRSN (63 aa).

Belongs to the universal ribosomal protein uS4 family. In terms of assembly, part of the 30S ribosomal subunit. Contacts protein S5. The interaction surface between S4 and S5 is involved in control of translational fidelity.

Functionally, one of the primary rRNA binding proteins, it binds directly to 16S rRNA where it nucleates assembly of the body of the 30S subunit. Its function is as follows. With S5 and S12 plays an important role in translational accuracy. This chain is Small ribosomal subunit protein uS4, found in Borrelia hermsii (strain HS1 / DAH).